A 397-amino-acid polypeptide reads, in one-letter code: Cytochrome b (397 aa).

Transmembrane regions (helical) follow at residues 38-58 (FGSL…FLAM), 82-104 (WLLR…LHIF), 119-139 (VWCL…IGYV), and 185-205 (FFSL…LHLA). Residues His88 and His102 each contribute to the heme b site. His189 and His203 together coordinate heme b. His208 lines the a ubiquinone pocket. Helical transmembrane passes span 231–251 (FYVK…IWIF), 295–315 (AGGV…PFFK), 327–347 (IYQG…WIGC), and 354–373 (FVTI…AITP).

This sequence belongs to the cytochrome b family. In terms of assembly, the main subunits of complex b-c1 are: cytochrome b, cytochrome c1 and the Rieske protein. It depends on heme b as a cofactor.

It localises to the mitochondrion inner membrane. In terms of biological role, component of the ubiquinol-cytochrome c reductase complex (complex III or cytochrome b-c1 complex) that is part of the mitochondrial respiratory chain. The b-c1 complex mediates electron transfer from ubiquinol to cytochrome c. Contributes to the generation of a proton gradient across the mitochondrial membrane that is then used for ATP synthesis. The polypeptide is Cytochrome b (MT-CYB) (Oryza sativa subsp. japonica (Rice)).